The following is a 323-amino-acid chain: Ribose import permease protein RbsC (323 aa).

7 helical membrane passes run 21-41, 55-75, 95-115, 122-142, 167-187, 217-237, and 273-293; these read FIAL…FFSV, AIIA…LSVG, IFLV…ISGV, VQAF…TMVY, VLGI…AWYI, IKVF…LIVT, and VMGT…LNLL.

The protein belongs to the binding-protein-dependent transport system permease family. AraH/RbsC subfamily. In terms of assembly, the complex is composed of an ATP-binding protein (RbsA), two transmembrane proteins (RbsC) and a solute-binding protein (RbsB).

The protein localises to the cell inner membrane. In terms of biological role, part of the ABC transporter complex RbsABC involved in ribose import. Probably responsible for the translocation of the substrate across the membrane. This is Ribose import permease protein RbsC (rbsC) from Haemophilus influenzae (strain ATCC 51907 / DSM 11121 / KW20 / Rd).